A 193-amino-acid chain; its full sequence is ATP-dependent Clp protease proteolytic subunit (193 aa).

The Nucleophile role is filled by serine 97. Histidine 122 is a catalytic residue.

Belongs to the peptidase S14 family. As to quaternary structure, fourteen ClpP subunits assemble into 2 heptameric rings which stack back to back to give a disk-like structure with a central cavity, resembling the structure of eukaryotic proteasomes.

The protein localises to the cytoplasm. It catalyses the reaction Hydrolysis of proteins to small peptides in the presence of ATP and magnesium. alpha-casein is the usual test substrate. In the absence of ATP, only oligopeptides shorter than five residues are hydrolyzed (such as succinyl-Leu-Tyr-|-NHMec, and Leu-Tyr-Leu-|-Tyr-Trp, in which cleavage of the -Tyr-|-Leu- and -Tyr-|-Trp bonds also occurs).. Functionally, cleaves peptides in various proteins in a process that requires ATP hydrolysis. Has a chymotrypsin-like activity. Plays a major role in the degradation of misfolded proteins. This chain is ATP-dependent Clp protease proteolytic subunit, found in Fusobacterium nucleatum subsp. nucleatum (strain ATCC 25586 / DSM 15643 / BCRC 10681 / CIP 101130 / JCM 8532 / KCTC 2640 / LMG 13131 / VPI 4355).